Consider the following 625-residue polypeptide: Exonuclease mut-7 homolog (625 aa).

Residue Ser17 is modified to Phosphoserine. One can recognise a 3'-5' exonuclease domain in the interval 410–602; sequence LIIVNKADEF…IYNTLIERVS (193 aa).

The protein belongs to the mut-7 family. As to quaternary structure, interacts with AGO1; the interaction is not RNA dependent. Mg(2+) is required as a cofactor.

Possesses 3'-5' exoribonuclease activity. Required for 3'-end trimming of AGO1-bound miRNAs, in particular multiple-isoform miRNAs, which represents a critical step in miRNA maturation. The chain is Exonuclease mut-7 homolog (Nbr) from Drosophila melanogaster (Fruit fly).